The chain runs to 901 residues: Clathrin coat assembly protein AP180 (901 aa).

In terms of domain architecture, ENTH spans 14–145 (QYSVTGSAVA…FSYRQMAFDF (132 aa)). 4 disordered regions span residues 285–326 (LEGK…DTSP), 397–424 (PISD…STTT), 497–522 (PETS…PSPA), and 573–606 (AAAP…PESS). Ser-296, Ser-300, and Ser-306 each carry phosphoserine. Residues 302 to 324 (LSKSSPATTVTSPNSTPAKTIDT) show a composition bias toward polar residues. Thr-310 carries an O-linked (GlcNAc) threonine glycan. Position 313 is a phosphoserine (Ser-313). The residue at position 317 (Thr-317) is a Phosphothreonine. Low complexity-rich tracts occupy residues 410 to 424 (TTTT…STTT) and 500 to 511 (SAPVVTPTASTA). Positions 512 to 522 (PPVPATAPSPA) are enriched in pro residues. Phosphoserine is present on residues Ser-594, Ser-600, Ser-621, Ser-627, and Ser-761. 2 disordered regions span residues 803-845 (SAGV…GMTM) and 857-901 (MMRP…KDFL). The span at 835–845 (GMPPSGTGMTM) shows a compositional bias: low complexity. Arg-859 carries the post-translational modification Asymmetric dimethylarginine; alternate. At Arg-859 the chain carries Omega-N-methylarginine; alternate. A compositionally biased stretch (polar residues) spans 870-882 (TQLSPSPTPATQS). Basic and acidic residues predominate over residues 887–901 (PAKDPLADLNIKDFL).

The protein belongs to the PICALM/SNAP91 family. In terms of assembly, binds AP2A2. Interacts with AP2B1; clathrin competes with SNAP91. Thr-310 can be modified by the addition of N-acetylglucosamine which can be further phosphorylated. There is no evidence for direct Thr-310 phosphorylation. As to expression, brain. Associated with the synapses.

It is found in the cell membrane. Its subcellular location is the membrane. The protein resides in the coated pit. In terms of biological role, adaptins are components of the adaptor complexes which link clathrin to receptors in coated vesicles. Clathrin-associated protein complexes are believed to interact with the cytoplasmic tails of membrane proteins, leading to their selection and concentration. Binding of AP180 to clathrin triskelia induces their assembly into 60-70 nm coats. This is Clathrin coat assembly protein AP180 (Snap91) from Mus musculus (Mouse).